The primary structure comprises 245 residues: MLFVSAIIDYAGETATHIVEKIKNGDKHLKEKFIKDYIPFILNIVSSFYSSKTGDLKSSDEYSIGLMAFNEAIEKFDVNKSKSFLKFAEMVIKKRMIDYFRKTSSIGRKEIPFSYFNSNNETEFRKKINNLDIEEEFNSYEFICELRDFSKKLESFGLSINNLPDYMPKHKDSREMCINIAKKIVENKSIFDKLKTKKYIQMKELSKIIDVHPKTVERNRAFIICLCILFDNDYGNFKSYLNKIF.

Positions 60 to 73 match the Polymerase core binding motif; that stretch reads DEYSIGLMAFNEAI. The H-T-H motif DNA-binding region spans 202–221; that stretch reads MKELSKIIDVHPKTVERNRA.

This sequence belongs to the sigma-70 factor family. SigI subfamily. Interacts with RsgI5.

The protein resides in the cytoplasm. With respect to regulation, negatively regulated by the anti-sigma-I factor RsgI5. Binding of the polysaccharide substrate to RsgI5 may lead to the release and activation of SigI5. Sigma factors are initiation factors that promote the attachment of RNA polymerase to specific initiation sites and are then released. This sigma factor is involved in regulation of cellulosomal genes via an external polysaccharide-sensing mechanism. This Acetivibrio thermocellus (strain ATCC 27405 / DSM 1237 / JCM 9322 / NBRC 103400 / NCIMB 10682 / NRRL B-4536 / VPI 7372) (Clostridium thermocellum) protein is RNA polymerase sigma factor SigI5.